We begin with the raw amino-acid sequence, 196 residues long: Large ribosomal subunit protein bL9 (196 aa).

Belongs to the bacterial ribosomal protein bL9 family.

In terms of biological role, binds to the 23S rRNA. The chain is Large ribosomal subunit protein bL9 from Gluconobacter oxydans (strain 621H) (Gluconobacter suboxydans).